The sequence spans 158 residues: Transcription elongation factor GreB (158 aa).

Belongs to the GreA/GreB family. GreB subfamily.

Necessary for efficient RNA polymerase transcription elongation past template-encoded arresting sites. The arresting sites in DNA have the property of trapping a certain fraction of elongating RNA polymerases that pass through, resulting in locked ternary complexes. Cleavage of the nascent transcript by cleavage factors such as GreA or GreB allows the resumption of elongation from the new 3'terminus. GreB releases sequences of up to 9 nucleotides in length. The protein is Transcription elongation factor GreB of Escherichia coli O157:H7.